The chain runs to 131 residues: Protein yippee-like PJ691.02 (131 aa).

The Yippee domain occupies 12–109; the sequence is RCYVCAKCKT…LEMQDAVLQR (98 aa). Zn(2+) contacts are provided by C16, C19, C72, and C75.

The protein belongs to the yippee family.

The chain is Protein yippee-like PJ691.02 from Schizosaccharomyces pombe (strain 972 / ATCC 24843) (Fission yeast).